Consider the following 597-residue polypeptide: NADH-quinone oxidoreductase subunits H/I (597 aa).

The interval 1-405 is NADH-quinone oxidoreductase subunit H; it reads MPDLSLFGHD…FPTPPVPADA (405 aa). Transmembrane regions (helical) follow at residues 12-32, 82-102, 124-144, 170-190, 195-215, 260-280, 286-306, 318-338, and 351-371; these read FWLVVAKSVFLFVYIILIPLV, PIYLLAPVVSVIPAFMAFAVI, VGVLYILAITSIGVYGIVLAG, MALCFAAVFLHAGTMATSGIV, PTWFVFLLLPSFLIYCVSMVG, ALATTLFLGGWSAPWPFNLIP, WWGLLWFTAKVWTFMFVFVWL, FMRLGWQLLIPVSLLWVMLVA, and ATGAQVVVGVALTAAMIGLFL. Residues 406–597 form an NADH-quinone oxidoreductase subunit I region; that stretch reads HRVDNPKGGL…APAGAKGGAR (192 aa). 2 4Fe-4S ferredoxin-type domains span residues 455 to 485 and 501 to 530; these read LNRHPDGLEKCIGCELCAWACPADAIYVEGA and RVYQINYLRCIGCGLCIEACPTRALTMTND. Residues Cys465, Cys468, Cys471, Cys475, Cys510, Cys513, Cys516, and Cys520 each coordinate [4Fe-4S] cluster.

In the N-terminal section; belongs to the complex I subunit 1 family. It in the C-terminal section; belongs to the complex I 23 kDa subunit family. NDH-1 is composed of 13 different subunits. Subunits NuoA, H/I, J, K, L, M, N constitute the membrane sector of the complex. The cofactor is [4Fe-4S] cluster.

It localises to the cell membrane. It carries out the reaction a quinone + NADH + 5 H(+)(in) = a quinol + NAD(+) + 4 H(+)(out). Its function is as follows. NDH-1 shuttles electrons from NADH, via FMN and iron-sulfur (Fe-S) centers, to quinones in the respiratory chain. The immediate electron acceptor for the enzyme in this species is believed to be ubiquinone. Couples the redox reaction to proton translocation (for every two electrons transferred, four hydrogen ions are translocated across the cytoplasmic membrane), and thus conserves the redox energy in a proton gradient. This subunit may bind ubiquinone. The protein is NADH-quinone oxidoreductase subunits H/I (nuoH/I) of Nocardia farcinica (strain IFM 10152).